The primary structure comprises 447 residues: 2-oxoadipate dioxygenase/decarboxylase (447 aa).

The 2-oxoadipate site is built by His68, Arg72, and His224. His68 contacts Fe(2+). Fe(2+)-binding residues include His224 and Glu290. 2-oxoadipate is bound at residue Val391.

The protein belongs to the 2-oxoadipate dioxygenase/decarboxylase family. Requires Fe(2+) as cofactor.

It carries out the reaction 2-oxoadipate + O2 = (R)-2-hydroxyglutarate + CO2. In terms of biological role, catalyzes the decarboxylation and hydroxylation of 2-oxoadipate (2OA) to form D-2-hydroxyglutarate (D-2-HGA). The polypeptide is 2-oxoadipate dioxygenase/decarboxylase (ydcJ) (Escherichia coli (strain K12)).